A 342-amino-acid polypeptide reads, in one-letter code: S-adenosylmethionine:tRNA ribosyltransferase-isomerase (342 aa).

It belongs to the QueA family. Monomer.

It is found in the cytoplasm. The enzyme catalyses 7-aminomethyl-7-carbaguanosine(34) in tRNA + S-adenosyl-L-methionine = epoxyqueuosine(34) in tRNA + adenine + L-methionine + 2 H(+). Its pathway is tRNA modification; tRNA-queuosine biosynthesis. Transfers and isomerizes the ribose moiety from AdoMet to the 7-aminomethyl group of 7-deazaguanine (preQ1-tRNA) to give epoxyqueuosine (oQ-tRNA). The protein is S-adenosylmethionine:tRNA ribosyltransferase-isomerase of Streptococcus pyogenes serotype M3 (strain ATCC BAA-595 / MGAS315).